Here is a 491-residue protein sequence, read N- to C-terminus: Serine/threonine-protein phosphatase 2A regulatory subunit B'' subunit delta (491 aa).

The 36-residue stretch at 331 to 366 folds into the EF-hand domain; it reads TTPTSTEYWFRCMDLDGDGALSMFELEFFYEEQAQR. Positions 344, 346, 348, and 355 each coordinate Ca(2+). Composition is skewed to acidic residues over residues 460–473 and 481–491; these read AMAE…EGSD and ADEDCDDLEPL. The segment at 460 to 491 is disordered; it reads AMAEDDDDHDEGSDPIDLYGLADEDCDDLEPL.

In terms of assembly, PP2A consists of a common heterodimeric core enzyme, composed of a 36 kDa catalytic subunit (subunit C) and a 65 kDa constant regulatory subunit (PR65 or subunit A), that associates with a variety of regulatory subunits. Proteins that associate with the core dimer include three families of regulatory subunits B (the R2/B/PR55/B55, R3/B''/PR72/PR130/PR59 and R5/B'/B56 families), the 48 kDa variable regulatory subunit, viral proteins, and cell signaling molecules. In terms of tissue distribution, expressed in testis, kidney, liver, lung, spleen, brain and heart.

Its function is as follows. The B regulatory subunit might modulate substrate selectivity and catalytic activity, and might also direct the localization of the catalytic enzyme to a particular subcellular compartment. Interacts with retinoblastoma-related protein p107 (in vivo). May target PP2A core dimer to p107 resulting in dephosphorylation of p107. The sequence is that of Serine/threonine-protein phosphatase 2A regulatory subunit B'' subunit delta (Ppp2r3d) from Mus musculus (Mouse).